Reading from the N-terminus, the 217-residue chain is Ribonuclease T (217 aa).

The region spanning 20–195 (VVVDVETAGF…YDTEKTAELF (176 aa)) is the Exonuclease domain. Residues aspartate 23, glutamate 25, histidine 182, and aspartate 187 each coordinate Mg(2+). Residue histidine 182 is the Proton donor/acceptor of the active site.

The protein belongs to the RNase T family. In terms of assembly, homodimer. It depends on Mg(2+) as a cofactor.

Its function is as follows. Trims short 3' overhangs of a variety of RNA species, leaving a one or two nucleotide 3' overhang. Responsible for the end-turnover of tRNA: specifically removes the terminal AMP residue from uncharged tRNA (tRNA-C-C-A). Also appears to be involved in tRNA biosynthesis. This chain is Ribonuclease T, found in Vibrio vulnificus (strain YJ016).